We begin with the raw amino-acid sequence, 393 residues long: Pigment production hydroxylase (393 aa).

Functionally, involved in pigment production acting as a hydroxylase that transforms indole to indoxyl, resulting in the formation of indigo. The sequence is that of Pigment production hydroxylase from Rhodococcus erythropolis (Arthrobacter picolinophilus).